Here is a 682-residue protein sequence, read N- to C-terminus: Methionine--tRNA ligase (682 aa).

A 'HIGH' region motif is present at residues 14-24; the sequence is PYANGPVHLGH. Positions 145, 148, 158, and 161 each coordinate Zn(2+). Positions 331-335 match the 'KMSKS' region motif; sequence KMSKS. Lys-334 contributes to the ATP binding site. One can recognise a tRNA-binding domain in the interval 580–682; that stretch reads AFAAVDLRVA…SGAKPGQRIK (103 aa).

It belongs to the class-I aminoacyl-tRNA synthetase family. MetG type 1 subfamily. In terms of assembly, homodimer. Zn(2+) is required as a cofactor.

It localises to the cytoplasm. The catalysed reaction is tRNA(Met) + L-methionine + ATP = L-methionyl-tRNA(Met) + AMP + diphosphate. Its function is as follows. Is required not only for elongation of protein synthesis but also for the initiation of all mRNA translation through initiator tRNA(fMet) aminoacylation. The protein is Methionine--tRNA ligase of Pseudomonas syringae pv. tomato (strain ATCC BAA-871 / DC3000).